The following is a 207-amino-acid chain: Abscisic acid receptor PYL4 (207 aa).

Positions 45–195 are START-like; that stretch reads HEVGPNQCCS…NLQSLAKIAE (151 aa). A disulfide bridge connects residues C52 and C176. Residues K81, 111–116, 138–144, and E160 contribute to the abscisate site; these read AASSTE and RLSNYRS. A Gate loop motif is present at residues 107–111; sequence SGLPA. The short motif at 137–139 is the Latch loop element; that stretch reads HRL.

Belongs to the PYR/PYL/RCAR abscisic acid intracellular receptor family. In terms of assembly, monomer. Homodimer. Binds ABA on one subunit only. Interacts with HAB1, ABI1 and ABI2, and possibly with other PP2Cs. Binds to CARs protein in an ABA-independent manner, both at the plasma membrane and in the nucleus. Interacts directly with CAR1 and CAR4. Interacts with TOPP1. Interacts with DDA1. Interacts with FREE1 (via N-terminus). Interacts with the E3 ubiquitin-protein ligase RSL1 at the plasma membrane. In terms of processing, ubiquitynated and degraded by the proteasome upon binding to the E3 ubiquitin-protein ligase RSL1 at the plasma membrane.

It is found in the cytoplasm. The protein localises to the nucleus. It localises to the cell membrane. Its subcellular location is the vacuole. Functionally, receptor for abscisic acid (ABA) required for ABA-mediated responses such as stomatal closure and germination inhibition. Inhibits the activity of group-A protein phosphatases type 2C (PP2Cs) when activated by ABA. Can be activated by both (-)-ABA and (+)-ABA. In Arabidopsis thaliana (Mouse-ear cress), this protein is Abscisic acid receptor PYL4.